The primary structure comprises 448 residues: MGQGTPGGMGKQGGAPGDRKPGGDGDKKDRKFEPPAAPSRVGRKQRKQKGPEAAARLPNVAPLSKCRLRLLKLERVKDYLLMEEEFVAAQERLRPTEDKTEEDRSKVDDLRGTPMSVGSLEEIIDESHAIVSSSVGPEYYVGILSFVDKDQLEPGCSILMHNKVLSVVGILQDEVDPMVSVMKVEKAPLESYADIGGLDAQIQEIKEAVELPLTHPELYEDIGIRPPKGVILYGEPGTGKTLLAKAVANSTSATFLRVVGSELIQKYLGDGPKLVRELFRVADELSPSIVFIDEIDAVGTKRYDAHSGGEREIQRTMLELLNQLDGFDSRGDVKVILATNRIESLDPALLRPGRIDRKIEFPLPDIKTRRRIFQIHTSKMTLADDVNLEEFVMTKDEFSGADIKAICTEAGLLALRERRMKVTHADFKKAKEKVMFKKKEGVPEGLYM.

Positions 1–16 (MGQGTPGGMGKQGGAP) are enriched in gly residues. Disordered stretches follow at residues 1-56 (MGQG…AAAR) and 93-112 (LRPT…DLRG). 2 stretches are compositionally biased toward basic and acidic residues: residues 17-33 (GDRK…RKFE) and 93-111 (LRPT…DDLR). ATP is bound at residue 234–241 (GEPGTGKT).

Belongs to the AAA ATPase family.

The protein localises to the cytoplasm. The protein resides in the nucleus. The 26S proteasome is involved in the ATP-dependent degradation of ubiquitinated proteins. The regulatory (or ATPase) complex confers ATP dependency and substrate specificity to the 26S complex. This chain is 26S proteasome regulatory subunit 4 homolog (TBP2), found in Oryza sativa subsp. japonica (Rice).